A 197-amino-acid chain; its full sequence is Putative NADH dehydrogenase/NAD(P)H nitroreductase Lcho_1290 (197 aa).

The protein belongs to the nitroreductase family. HadB/RutE subfamily. Requires FMN as cofactor.

The polypeptide is Putative NADH dehydrogenase/NAD(P)H nitroreductase Lcho_1290 (Leptothrix cholodnii (strain ATCC 51168 / LMG 8142 / SP-6) (Leptothrix discophora (strain SP-6))).